Here is a 58-residue protein sequence, read N- to C-terminus: Photosystem II reaction center protein K (58 aa).

Residues 1-21 (MLAIFNIYLDNAFHLNGIILA) constitute a propeptide that is removed on maturation. Residues 29–49 (IFDPIVDVMPIIPVFFFLLAF) form a helical membrane-spanning segment.

The protein belongs to the PsbK family. PSII is composed of 1 copy each of membrane proteins PsbA, PsbB, PsbC, PsbD, PsbE, PsbF, PsbH, PsbI, PsbJ, PsbK, PsbL, PsbM, PsbT, PsbX, PsbY, PsbZ, Psb30/Ycf12, at least 3 peripheral proteins of the oxygen-evolving complex and a large number of cofactors. It forms dimeric complexes.

The protein localises to the plastid. The protein resides in the chloroplast thylakoid membrane. Functionally, one of the components of the core complex of photosystem II (PSII). PSII is a light-driven water:plastoquinone oxidoreductase that uses light energy to abstract electrons from H(2)O, generating O(2) and a proton gradient subsequently used for ATP formation. It consists of a core antenna complex that captures photons, and an electron transfer chain that converts photonic excitation into a charge separation. The chain is Photosystem II reaction center protein K from Physcomitrium patens (Spreading-leaved earth moss).